The chain runs to 274 residues: Orotidine 5'-phosphate decarboxylase (274 aa).

The active-site Proton donor is lysine 95.

Belongs to the OMP decarboxylase family. Type 2 subfamily.

It carries out the reaction orotidine 5'-phosphate + H(+) = UMP + CO2. Its pathway is pyrimidine metabolism; UMP biosynthesis via de novo pathway; UMP from orotate: step 2/2. The polypeptide is Orotidine 5'-phosphate decarboxylase (pyrF) (Mycobacterium bovis (strain ATCC BAA-935 / AF2122/97)).